The chain runs to 92 residues: MGRSLKKGPFADHHLLAKVDKANEAGDKHVIKTWSRRSTIFPEFIGHTIAVYDGRKHVPVYVTEDMVGHKLGEFAPTRSYKGHAGNDKKTKR.

The protein belongs to the universal ribosomal protein uS19 family.

In terms of biological role, protein S19 forms a complex with S13 that binds strongly to the 16S ribosomal RNA. The protein is Small ribosomal subunit protein uS19 of Exiguobacterium sibiricum (strain DSM 17290 / CCUG 55495 / CIP 109462 / JCM 13490 / 255-15).